The sequence spans 393 residues: Putative mitogen-activated protein kinase kinase kinase 7-like (393 aa).

In terms of domain architecture, Protein kinase spans K11 to L266. Residues L17–V25 and K38 contribute to the ATP site. D133 functions as the Proton acceptor in the catalytic mechanism. The disordered stretch occupies residues A339–E379.

It belongs to the protein kinase superfamily. STE Ser/Thr protein kinase family. MAP kinase kinase kinase subfamily. Mg(2+) is required as a cofactor.

It catalyses the reaction L-seryl-[protein] + ATP = O-phospho-L-seryl-[protein] + ADP + H(+). The catalysed reaction is L-threonyl-[protein] + ATP = O-phospho-L-threonyl-[protein] + ADP + H(+). The sequence is that of Putative mitogen-activated protein kinase kinase kinase 7-like (Takl1) from Drosophila melanogaster (Fruit fly).